We begin with the raw amino-acid sequence, 936 residues long: Periplasmic nitrate reductase (936 aa).

The tat-type signal signal peptide spans 1–31 (MALSRRDFLKSSAAAAAASAVGLSVPKEVEA). In terms of domain architecture, 4Fe-4S Mo/W bis-MGD-type spans 40–96 (WRWDKAVCRFCGTGCGIMIATKDDRIVAVKGDPLAPVNRGLNCIKGYFTAKIMYGAD). Residues cysteine 47, cysteine 50, cysteine 54, and cysteine 82 each coordinate [4Fe-4S] cluster. Mo-bis(molybdopterin guanine dinucleotide) is bound by residues lysine 84, glutamine 152, asparagine 177, cysteine 181, 214-221 (WGSNMAEM), 246-250 (STYTH), methionine 424, glutamine 428, asparagine 534, 559-560 (SD), lysine 582, aspartate 609, and 826-835 (TGRVLEHWHS). Position 902 (tryptophan 902) interacts with substrate. Positions 910 and 927 each coordinate Mo-bis(molybdopterin guanine dinucleotide).

It belongs to the prokaryotic molybdopterin-containing oxidoreductase family. NasA/NapA/NarB subfamily. As to quaternary structure, component of the periplasmic nitrate reductase NapAB complex composed of NapA and NapB. [4Fe-4S] cluster serves as cofactor. Mo-bis(molybdopterin guanine dinucleotide) is required as a cofactor. Post-translationally, predicted to be exported by the Tat system. The position of the signal peptide cleavage has not been experimentally proven.

It localises to the periplasm. The enzyme catalyses 2 Fe(II)-[cytochrome] + nitrate + 2 H(+) = 2 Fe(III)-[cytochrome] + nitrite + H2O. Catalytic subunit of the periplasmic nitrate reductase complex NapAB. Receives electrons from NapB and catalyzes the reduction of nitrate to nitrite. The polypeptide is Periplasmic nitrate reductase (Nitratiruptor sp. (strain SB155-2)).